The following is a 308-amino-acid chain: Ornithine carbamoyltransferase (308 aa).

Carbamoyl phosphate contacts are provided by residues 56–59 (STRT), glutamine 83, arginine 107, and 134–137 (HPCQ). Residues asparagine 165, aspartate 225, and 229 to 230 (SM) each bind L-ornithine. Carbamoyl phosphate-binding positions include 266-267 (CL) and arginine 294.

Belongs to the aspartate/ornithine carbamoyltransferase superfamily. OTCase family.

The protein resides in the cytoplasm. It carries out the reaction carbamoyl phosphate + L-ornithine = L-citrulline + phosphate + H(+). It participates in amino-acid biosynthesis; L-arginine biosynthesis; L-arginine from L-ornithine and carbamoyl phosphate: step 1/3. Its function is as follows. Reversibly catalyzes the transfer of the carbamoyl group from carbamoyl phosphate (CP) to the N(epsilon) atom of ornithine (ORN) to produce L-citrulline. The sequence is that of Ornithine carbamoyltransferase from Cereibacter sphaeroides (strain ATCC 17029 / ATH 2.4.9) (Rhodobacter sphaeroides).